The chain runs to 459 residues: Chromosomal replication initiator protein DnaA (459 aa).

The segment at 1–73 is domain I, interacts with DnaA modulators; that stretch reads MEIPIESLWS…AHAVQDILGH (73 aa). The interval 73–117 is domain II; sequence HPVGIYITVAQGDEVSHFSEREVSWESTNPSSIPESLPHHNHKTT. The domain III, AAA+ region stretch occupies residues 118–334; it reads ELNSKYVFSR…GALIRAVAYI (217 aa). Positions 162, 164, 165, and 166 each coordinate ATP. Residues 335 to 459 are domain IV, binds dsDNA; that stretch reads SIWGLPMTVE…INMTSRSQKS (125 aa).

This sequence belongs to the DnaA family. As to quaternary structure, oligomerizes as a right-handed, spiral filament on DNA at oriC.

It is found in the cytoplasm. Its function is as follows. Plays an essential role in the initiation and regulation of chromosomal replication. ATP-DnaA binds to the origin of replication (oriC) to initiate formation of the DNA replication initiation complex once per cell cycle. Binds the DnaA box (a 9 base pair repeat at the origin) and separates the double-stranded (ds)DNA. Forms a right-handed helical filament on oriC DNA; dsDNA binds to the exterior of the filament while single-stranded (ss)DNA is stabiized in the filament's interior. The ATP-DnaA-oriC complex binds and stabilizes one strand of the AT-rich DNA unwinding element (DUE), permitting loading of DNA polymerase. After initiation quickly degrades to an ADP-DnaA complex that is not apt for DNA replication. Binds acidic phospholipids. The sequence is that of Chromosomal replication initiator protein DnaA from Nostoc punctiforme (strain ATCC 29133 / PCC 73102).